Consider the following 397-residue polypeptide: tRNA-specific 2-thiouridylase MnmA (397 aa).

ATP is bound by residues 19–26 and Leu-45; that span reads AMSGGVDS. Cys-113 acts as the Nucleophile in catalysis. An intrachain disulfide couples Cys-113 to Cys-210. Residue Gly-137 participates in ATP binding. Residues 160-162 form an interaction with tRNA region; it reads RDQ. The active-site Cysteine persulfide intermediate is Cys-210.

This sequence belongs to the MnmA/TRMU family.

The protein resides in the cytoplasm. The catalysed reaction is S-sulfanyl-L-cysteinyl-[protein] + uridine(34) in tRNA + AH2 + ATP = 2-thiouridine(34) in tRNA + L-cysteinyl-[protein] + A + AMP + diphosphate + H(+). Catalyzes the 2-thiolation of uridine at the wobble position (U34) of tRNA, leading to the formation of s(2)U34. The chain is tRNA-specific 2-thiouridylase MnmA from Bradyrhizobium sp. (strain BTAi1 / ATCC BAA-1182).